A 2513-amino-acid polypeptide reads, in one-letter code: Probable polyketide synthase 7 (2513 aa).

The Ketosynthase family 3 (KS3) domain occupies 11–441 (EKGVAIVGIG…GSNCCLLISE (431 aa)). Catalysis depends on for beta-ketoacyl synthase activity residues cysteine 181, histidine 323, and histidine 362. The acyl/malonyl transferase stretch occupies residues 632–665 (GVNPSFILGHSLGEISASYCSGMIDLDTFCYTVY). Residue serine 642 is the For acyl/malonyl transferase activity of the active site. The N-terminal hotdog fold stretch occupies residues 922–1044 (IDHLGISNSF…SNFQLLDHGN (123 aa)). The region spanning 922-1206 (IDHLGISNSF…CKSLIPIKDS (285 aa)) is the PKS/mFAS DH domain. Histidine 956 functions as the Proton acceptor; for dehydratase activity in the catalytic mechanism. A C-terminal hotdog fold region spans residues 1061-1206 (NLSKLTKNEL…CKSLIPIKDS (146 aa)). Aspartate 1119 (proton donor; for dehydratase activity) is an active-site residue. The 78-residue stretch at 2426–2503 (IGNKNIDELF…ISIKMILNSL (78 aa)) folds into the Carrier domain. Serine 2463 carries the post-translational modification O-(pantetheine 4'-phosphoryl)serine.

Requires pantetheine 4'-phosphate as cofactor.

Functionally, probable polyketide synthase. This is Probable polyketide synthase 7 (pks7) from Dictyostelium discoideum (Social amoeba).